Here is a 333-residue protein sequence, read N- to C-terminus: Ketol-acid reductoisomerase (NADP(+)) (333 aa).

One can recognise a KARI N-terminal Rossmann domain in the interval 6–186 (TRVYTECDAD…GALRAGAIQT (181 aa)). NADP(+) contacts are provided by residues 29-32 (YGSQ), K52, S55, S57, and 87-90 (DPAQ). H112 is an active-site residue. G138 contacts NADP(+). The region spanning 187-332 (TFTEETETDL…ARLRALFSWS (146 aa)) is the KARI C-terminal knotted domain. Residues D195, E199, E231, and E235 each contribute to the Mg(2+) site. S256 serves as a coordination point for substrate.

The protein belongs to the ketol-acid reductoisomerase family. Requires Mg(2+) as cofactor.

The catalysed reaction is (2R)-2,3-dihydroxy-3-methylbutanoate + NADP(+) = (2S)-2-acetolactate + NADPH + H(+). It carries out the reaction (2R,3R)-2,3-dihydroxy-3-methylpentanoate + NADP(+) = (S)-2-ethyl-2-hydroxy-3-oxobutanoate + NADPH + H(+). The protein operates within amino-acid biosynthesis; L-isoleucine biosynthesis; L-isoleucine from 2-oxobutanoate: step 2/4. It participates in amino-acid biosynthesis; L-valine biosynthesis; L-valine from pyruvate: step 2/4. Involved in the biosynthesis of branched-chain amino acids (BCAA). Catalyzes an alkyl-migration followed by a ketol-acid reduction of (S)-2-acetolactate (S2AL) to yield (R)-2,3-dihydroxy-isovalerate. In the isomerase reaction, S2AL is rearranged via a Mg-dependent methyl migration to produce 3-hydroxy-3-methyl-2-ketobutyrate (HMKB). In the reductase reaction, this 2-ketoacid undergoes a metal-dependent reduction by NADPH to yield (R)-2,3-dihydroxy-isovalerate. In Tropheryma whipplei (strain TW08/27) (Whipple's bacillus), this protein is Ketol-acid reductoisomerase (NADP(+)).